The primary structure comprises 532 residues: tRNA-2-methylthio-N(6)-dimethylallyladenosine synthase (532 aa).

The segment at 1 to 21 (MTSTVAHGAGSAGPADDVEPM) is disordered. The MTTase N-terminal domain occupies 24–140 (RTYQVRTYGC…LPALLDRARH (117 aa)). Residues Cys-33, Cys-69, Cys-103, Cys-177, Cys-181, and Cys-184 each coordinate [4Fe-4S] cluster. Positions 163 to 399 (RESAYAAWVS…VELQEQISLE (237 aa)) constitute a Radical SAM core domain. Residues 402–470 (RAIVGQRVEL…PHHLIADGGI (69 aa)) enclose the TRAM domain. The tract at residues 510-532 (TSCGSAGGCGSADGAGSSAGDPQ) is disordered. The span at 523–532 (GAGSSAGDPQ) shows a compositional bias: low complexity.

It belongs to the methylthiotransferase family. MiaB subfamily. In terms of assembly, monomer. The cofactor is [4Fe-4S] cluster.

The protein localises to the cytoplasm. The catalysed reaction is N(6)-dimethylallyladenosine(37) in tRNA + (sulfur carrier)-SH + AH2 + 2 S-adenosyl-L-methionine = 2-methylsulfanyl-N(6)-dimethylallyladenosine(37) in tRNA + (sulfur carrier)-H + 5'-deoxyadenosine + L-methionine + A + S-adenosyl-L-homocysteine + 2 H(+). Its function is as follows. Catalyzes the methylthiolation of N6-(dimethylallyl)adenosine (i(6)A), leading to the formation of 2-methylthio-N6-(dimethylallyl)adenosine (ms(2)i(6)A) at position 37 in tRNAs that read codons beginning with uridine. This is tRNA-2-methylthio-N(6)-dimethylallyladenosine synthase from Mycobacterium ulcerans (strain Agy99).